Consider the following 395-residue polypeptide: Phosphonoacetaldehyde reductase (395 aa).

Positions 199, 268, and 282 each coordinate Fe cation.

Belongs to the iron-containing alcohol dehydrogenase family. The cofactor is Fe cation.

It carries out the reaction 2-hydroxyethylphosphonate + NAD(+) = phosphonoacetaldehyde + NADH + H(+). It participates in secondary metabolite biosynthesis; bialaphos biosynthesis. Functionally, catalyzes the reduction of phosphonoacetaldehyde to 2-hydroxyethylphosphonate, a step in the biosynthesis of phosphinothricin tripeptide. Phosphinothricin tripeptide (PTT), also known as bialaphos (BA), is a natural-product antibiotic and potent herbicide. Can use both NAD and NADP but the preferred substrate is NAD. This chain is Phosphonoacetaldehyde reductase (phpC), found in Streptomyces viridochromogenes (strain DSM 40736 / JCM 4977 / BCRC 1201 / Tue 494).